The following is a 2856-amino-acid chain: Lipopolysaccharide-responsive and beige-like anchor protein (2856 aa).

2 disordered regions span residues 1–35 and 939–1107; these read MASE…ALSL and EQRK…DDDY. Alanine 2 is subject to N-acetylalanine. Serine 10, serine 979, and serine 1003 each carry phosphoserine. Positions 991 to 1009 are enriched in polar residues; the sequence is ENSSIGRASSIDSASNTEL. Residues 1010–1026 are compositionally biased toward basic and acidic residues; that stretch reads QTHDMSSDEKKVERENQ. Positions 1073–1082 are enriched in low complexity; sequence SEVSASISSP. Serine 1097, serine 1132, serine 1136, serine 1219, serine 1221, serine 1228, serine 1244, and serine 1258 each carry phosphoserine. The disordered stretch occupies residues 1253–1296; sequence FELKASTSTEAPQPQRHGLEISRQQEQTAQGTAPDAVDQQRRDS. Residues 1274–1283 show a composition bias toward polar residues; sequence SRQQEQTAQG. The stretch at 1298–1340 is one WD 1 repeat; sequence STMFRIPEFKWSQMHQRLLTDLLFSIETDIQMWRSHSTKTVMD. Phosphoserine is present on residues serine 1487 and serine 1497. The helical transmembrane segment at 1529-1545 threads the bilayer; that stretch reads AQFLALAVVYFISVLMV. 2 disordered regions span residues 1556-1621 and 1750-1778; these read DERH…LGSG and SAVS…SPKC. The span at 1563 to 1573 shows a compositional bias: polar residues; it reads LKETSSDNGNA. A compositionally biased stretch (low complexity) spans 1586 to 1601; sequence SSLTLSSVEESLEGTS. Serine 1608, serine 1770, serine 1773, and serine 2057 each carry phosphoserine. The 109-residue stretch at 2066–2174 folds into the BEACH-type PH domain; that stretch reads NLAGPVSLST…TVKKVVNYLP (109 aa). One can recognise a BEACH domain in the interval 2193 to 2482; it reads ATPRQLFKAS…QLLIEPHPPR (290 aa). Position 2489 is a phosphoserine (serine 2489). WD repeat units follow at residues 2584 to 2626, 2629 to 2672, 2688 to 2728, 2770 to 2809, and 2812 to 2851; these read DQSI…LIQV, GHWD…SGIG, GHDY…RTLE, ETDD…QLFA, and GCDA…WHHE.

As to quaternary structure, interacts with TOM1 and TOLLIP. In terms of tissue distribution, isoform 1 is expressed in the brain, is absent from the lung and the bone marrow and is less abundant in the spleen. Isoform 2 is expressed in the spleen, lung, brain and bone marrow. Isoform 3 is expressed in the brain, is absent from the bone marrow and is less abundant in the spleen and lung.

The protein localises to the cell membrane. It is found in the endoplasmic reticulum membrane. Its subcellular location is the golgi apparatus. The protein resides in the trans-Golgi network membrane. It localises to the lysosome membrane. Involved in coupling signal transduction and vesicle trafficking to enable polarized secretion and/or membrane deposition of immune effector molecules. Involved in phagophore growth during mitophagy by regulating ATG9A trafficking to mitochondria. This Mus musculus (Mouse) protein is Lipopolysaccharide-responsive and beige-like anchor protein (Lrba).